The following is a 469-amino-acid chain: Properdin (469 aa).

The first 27 residues, 1-27 (MITEGAQAPRLLLPPLLLLLTLPATGS), serve as a signal peptide directing secretion. TSP type-1 domains follow at residues 28–76 (DPVL…QPCR), 77–134 (SPRW…QCCP), 136–191 (MGGW…QVCP), 193–255 (HGAW…PPCP), 257–313 (AGGW…VPCP), 315–377 (DGEW…QHCP), and 379–462 (KGSW…PACK). 3 disulfide bridges follow: Cys-32/Cys-56, Cys-43/Cys-72, and Cys-57/Cys-75. 2 C-linked (Man) tryptophan glycosylation sites follow: Trp-83 and Trp-86. Cystine bridges form between Cys-89–Cys-127, Cys-93–Cys-133, Cys-104–Cys-111, Cys-132–Cys-170, Cys-148–Cys-184, Cys-152–Cys-190, and Cys-163–Cys-174. Residue Thr-92 is glycosylated (O-linked (Fuc...) threonine). C-linked (Man) tryptophan glycans are attached at residues Trp-139, Trp-142, and Trp-145. A glycan (O-linked (Fuc...) threonine) is linked at Thr-151. Residues Trp-196, Trp-199, and Trp-202 are each glycosylated (C-linked (Man) tryptophan). 3 cysteine pairs are disulfide-bonded: Cys-205-Cys-248, Cys-209-Cys-254, and Cys-224-Cys-238. Residue Ser-208 is glycosylated (O-linked (Fuc...) serine). The disordered stretch occupies residues 219–238 (TRSRKCSAPEPSQKPPGKPC). C-linked (Man) tryptophan glycosylation is found at Trp-260 and Trp-263. 3 disulfides stabilise this stretch: Cys-269–Cys-306, Cys-273–Cys-312, and Cys-284–Cys-296. Thr-272 carries O-linked (Fuc...) threonine glycosylation. C-linked (Man) tryptophan glycosylation is found at Trp-321 and Trp-324. 3 disulfides stabilise this stretch: Cys-327-Cys-370, Cys-337-Cys-376, and Cys-350-Cys-360. The segment at 351–359 (RGRKFDGHR) is interaction with Complement C3 beta chain. Trp-382, Trp-385, and Trp-388 each carry a C-linked (Man) tryptophan glycan. Disulfide bonds link Cys-391–Cys-455, Cys-395–Cys-461, and Cys-407–Cys-439. N-linked (GlcNAc...) (complex) asparagine glycosylation occurs at Asn-428.

As to quaternary structure, in plasma, properdin exists as dimers, trimers or tetramers in the relative proportions of 26:54:20. Interacts with the pro-C3-convertase enzyme complex (C3b-Bb) comprised of Complement C3 beta chain (C3b) and the Complement factor B Bb fragment (Bb), where it binds (via its TSP type-1 5 domain) with C3b and Bb. This interaction stabilizes the complex and allows it to become the active C3-convertase enzyme complex (C3b-Bb-FP). Interacts with C3b. Interacts with CFB.

It localises to the secreted. Functionally, a positive regulator of the alternate pathway (AP) of complement. It binds to and stabilizes the C3- and C5-convertase enzyme complexes. Inhibits CFI-CFH mediated degradation of Complement C3 beta chain (C3b). The protein is Properdin of Homo sapiens (Human).